Consider the following 479-residue polypeptide: ATP synthase subunit beta (479 aa).

168–175 (GGAGVGKT) provides a ligand contact to ATP.

The protein belongs to the ATPase alpha/beta chains family. F-type ATPases have 2 components, CF(1) - the catalytic core - and CF(0) - the membrane proton channel. CF(1) has five subunits: alpha(3), beta(3), gamma(1), delta(1), epsilon(1). CF(0) has three main subunits: a(1), b(2) and c(9-12). The alpha and beta chains form an alternating ring which encloses part of the gamma chain. CF(1) is attached to CF(0) by a central stalk formed by the gamma and epsilon chains, while a peripheral stalk is formed by the delta and b chains.

The protein resides in the cell membrane. The catalysed reaction is ATP + H2O + 4 H(+)(in) = ADP + phosphate + 5 H(+)(out). In terms of biological role, produces ATP from ADP in the presence of a proton gradient across the membrane. The catalytic sites are hosted primarily by the beta subunits. This chain is ATP synthase subunit beta, found in Parafrankia sp. (strain EAN1pec).